A 382-amino-acid chain; its full sequence is MGIHGLAKLIADVAPAAIKEHDIKSYFGRKVAVDASMCIYQFLIAVRQDGNMLQNEEGETTSHLMGMFYRTIRMLEHGIKPVYVFDGKPPQMKSGELAKRSERRAEAEKLLEAAEEAGEVENIEKFNKRLVKVTKQHNEECKKLLSLMGIPYVDAPCEAEATCAALVKAGKVYAAATEDMDALTFGTPVLLRHLTASEAKKLPIQEFHLNRVFQDIGINHEQFVDLCILLGSDYCETIRGIGPKRAIDLIRQHKTIEEIIDNIDLKKYPIPENWLHKEARQLFLEPEVIDADITELKWTEPDEEGLVAFMCGEKQFSEDRIRNGAKKLAKNRQGSTQGRLDDFFKVTGSISSTKRKEVESKGSTKKKSKTGGTPAGKFKRGK.

The tract at residues 1–104 (MGIHGLAKLI…GELAKRSERR (104 aa)) is N-domain. Asp34 provides a ligand contact to Mg(2+). DNA-binding residues include Arg47 and Arg70. Residues Asp86, Glu158, Glu160, Asp179, and Asp181 each contribute to the Mg(2+) site. The tract at residues 122-253 (NIEKFNKRLV…KRAIDLIRQH (132 aa)) is I-domain. Glu158 is a DNA binding site. 2 residues coordinate DNA: Gly231 and Asp233. Position 233 (Asp233) interacts with Mg(2+). Residues 336–344 (TQGRLDDFF) form an interaction with PCNA region. Residues 352-382 (STKRKEVESKGSTKKKSKTGGTPAGKFKRGK) are disordered.

Belongs to the XPG/RAD2 endonuclease family. FEN1 subfamily. Interacts with PCNA. Three molecules of fen1 bind to one PCNA trimer with each molecule binding to one PCNA monomer. PCNA stimulates the nuclease activity without altering cleavage specificity. It depends on Mg(2+) as a cofactor. Phosphorylated. Phosphorylation upon DNA damage induces relocalization to the nuclear plasma.

It localises to the nucleus. The protein localises to the nucleolus. It is found in the nucleoplasm. The protein resides in the mitochondrion. In terms of biological role, structure-specific nuclease with 5'-flap endonuclease and 5'-3' exonuclease activities involved in DNA replication and repair. During DNA replication, cleaves the 5'-overhanging flap structure that is generated by displacement synthesis when DNA polymerase encounters the 5'-end of a downstream Okazaki fragment. It enters the flap from the 5'-end and then tracks to cleave the flap base, leaving a nick for ligation. Also involved in the long patch base excision repair (LP-BER) pathway, by cleaving within the apurinic/apyrimidinic (AP) site-terminated flap. Acts as a genome stabilization factor that prevents flaps from equilibrating into structures that lead to duplications and deletions. Also possesses 5'-3' exonuclease activity on nicked or gapped double-stranded DNA, and exhibits RNase H activity. Also involved in replication and repair of rDNA and in repairing mitochondrial DNA. The polypeptide is Flap endonuclease 1-B (fen1-b) (Xenopus laevis (African clawed frog)).